We begin with the raw amino-acid sequence, 237 residues long: Ribonuclease PH (237 aa).

Phosphate contacts are provided by residues arginine 86 and 124-126; that span reads GTR.

This sequence belongs to the RNase PH family. As to quaternary structure, homohexameric ring arranged as a trimer of dimers.

It catalyses the reaction tRNA(n+1) + phosphate = tRNA(n) + a ribonucleoside 5'-diphosphate. Its function is as follows. Phosphorolytic 3'-5' exoribonuclease that plays an important role in tRNA 3'-end maturation. Removes nucleotide residues following the 3'-CCA terminus of tRNAs; can also add nucleotides to the ends of RNA molecules by using nucleoside diphosphates as substrates, but this may not be physiologically important. Probably plays a role in initiation of 16S rRNA degradation (leading to ribosome degradation) during starvation. The sequence is that of Ribonuclease PH from Beijerinckia indica subsp. indica (strain ATCC 9039 / DSM 1715 / NCIMB 8712).